The chain runs to 232 residues: MAKLGKRARAAREAFAGKENVTVEEAVALIKANSSVKFDETVEIAMNLGVDPRHADQMVRGVVGLPNGTGKTVRVAVFARGAKADEATAAGADIVGAEDLMETVQSGKIEFDRCIATPDMMPIVGRLGKVLGPRNLMPNPKVGTVTMDVEAAVKAAKGGEVQFKAEKGGVVHAGVGKLSFDEAKLVENIRAFVGAVSKAKPTGAKGAYMKKIALSSTMGPGVSVAIEDANVE.

The protein belongs to the universal ribosomal protein uL1 family. Part of the 50S ribosomal subunit.

In terms of biological role, binds directly to 23S rRNA. The L1 stalk is quite mobile in the ribosome, and is involved in E site tRNA release. Its function is as follows. Protein L1 is also a translational repressor protein, it controls the translation of the L11 operon by binding to its mRNA. In Roseobacter denitrificans (strain ATCC 33942 / OCh 114) (Erythrobacter sp. (strain OCh 114)), this protein is Large ribosomal subunit protein uL1.